The primary structure comprises 1407 residues: JmjC domain-containing histone demethylation protein 1 (1407 aa).

Disordered stretches follow at residues 1 to 86 (MISA…SSTI) and 98 to 151 (PTFT…NAFS). Basic and acidic residues-rich tracts occupy residues 55-67 (DHVR…KRPS) and 125-140 (PVER…RDES). The span at 141–150 (SYTQHRSNAF) shows a compositional bias: polar residues. The segment at 323-382 (QASCATCNLVRIPVDNEDQDVTWISCDGCKRWFHIVCAGFKNDRETRTVDKFICKTCRPI) adopts a PHD-type zinc-finger fold. Positions 577–735 (VSQSKLGRLI…MQIKIAKIEK (159 aa)) constitute a JmjC domain. A substrate-binding site is contributed by Thr628. Fe cation contacts are provided by His631 and Asp633. Lys648 is a binding site for substrate. A Fe cation-binding site is contributed by His703. Disordered regions lie at residues 893 to 987 (KLSL…LGPK), 1004 to 1027 (KEEN…HHTP), 1122 to 1183 (IKAQ…QDSV), and 1252 to 1389 (DEMD…SLRL). 2 stretches are compositionally biased toward basic and acidic residues: residues 896–914 (LAEK…RNAD) and 928–938 (LSERPAVDIQK). The span at 1008–1027 (NGASGSQMTVSTSSLGHHTP) shows a compositional bias: polar residues. The span at 1254-1264 (MDIHDQVDAGG) shows a compositional bias: basic and acidic residues. The segment covering 1273 to 1284 (PSSGSRQSSRQP) has biased composition (low complexity). Residues 1285-1296 (RQVERYMPEVHF) show a composition bias toward basic and acidic residues. Over residues 1297 to 1349 (AKTAKSTTTTPQTTRRSSFGSSGRKTTPGLSSGSKKSGSRPSSSHGKKSLSPS) the composition is skewed to low complexity.

The protein belongs to the JHDM1 histone demethylase family. Fe(2+) is required as a cofactor.

The protein localises to the nucleus. The catalysed reaction is N(6),N(6)-dimethyl-L-lysyl(36)-[histone H3] + 2 2-oxoglutarate + 2 O2 = L-lysyl(36)-[histone H3] + 2 formaldehyde + 2 succinate + 2 CO2. Functionally, histone demethylase that specifically demethylates 'Lys-36' of histone H3, thereby playing a central role in histone code. In Emericella nidulans (strain FGSC A4 / ATCC 38163 / CBS 112.46 / NRRL 194 / M139) (Aspergillus nidulans), this protein is JmjC domain-containing histone demethylation protein 1 (jhd1).